We begin with the raw amino-acid sequence, 380 residues long: Phospho-N-acetylmuramoyl-pentapeptide-transferase (380 aa).

The next 9 membrane-spanning stretches (helical) occupy residues 25-45 (RAAA…PAII), 70-90 (TTPT…VLLW), 98-118 (VLLA…DDYL), 142-162 (VLCG…TLPG), 173-193 (VLVV…VTFI), 209-229 (GLSS…AYVL), 245-265 (GAGE…GFLW), 272-294 (QVFM…AILL), and 357-377 (QVVV…LSTL).

Belongs to the glycosyltransferase 4 family. MraY subfamily. The cofactor is Mg(2+).

It is found in the cell inner membrane. It carries out the reaction UDP-N-acetyl-alpha-D-muramoyl-L-alanyl-gamma-D-glutamyl-meso-2,6-diaminopimeloyl-D-alanyl-D-alanine + di-trans,octa-cis-undecaprenyl phosphate = di-trans,octa-cis-undecaprenyl diphospho-N-acetyl-alpha-D-muramoyl-L-alanyl-D-glutamyl-meso-2,6-diaminopimeloyl-D-alanyl-D-alanine + UMP. It participates in cell wall biogenesis; peptidoglycan biosynthesis. Catalyzes the initial step of the lipid cycle reactions in the biosynthesis of the cell wall peptidoglycan: transfers peptidoglycan precursor phospho-MurNAc-pentapeptide from UDP-MurNAc-pentapeptide onto the lipid carrier undecaprenyl phosphate, yielding undecaprenyl-pyrophosphoryl-MurNAc-pentapeptide, known as lipid I. The polypeptide is Phospho-N-acetylmuramoyl-pentapeptide-transferase (Gemmatimonas aurantiaca (strain DSM 14586 / JCM 11422 / NBRC 100505 / T-27)).